A 783-amino-acid polypeptide reads, in one-letter code: Transcription factor E4F1 (783 aa).

Residues 40–84 (GFLGLPAPFSEEDEDDVHRCGRCQVEFTALEDFVQHKIQKTCHRA) form a required for ubiquitin ligase activity region. Ser49 carries the post-translational modification Phosphoserine. The segment at 185 to 264 (LLVNKEGRYV…GKSFRESGAL (80 aa)) is mediates dimerization, DNA-binding, transcription repression of CCNA2 and interaction with HMGA2. 2 C2H2-type zinc fingers span residues 193–215 (YVCM…MVTH) and 221–243 (HECK…HRRH). The segment at 249–273 (YKCAKCGKSFRESGALTRHLKSLTP) adopts a C2H2-type 3; degenerate zinc-finger fold. Residues 368–565 (NLLHQAMQNS…REKGSLVRHV (198 aa)) are mediates interaction with CDKN2A. The tract at residues 386 to 407 (GEESALEPAPPSGSSPQCLGDG) is disordered. 5 C2H2-type zinc fingers span residues 434 to 456 (HPCP…KRGH), 462 to 484 (FTCT…QEVH), 490 to 512 (FRCG…RRVH), 518 to 540 (FPCP…FRTH), and 546 to 568 (HVCQ…VRHH). The tract at residues 434-598 (HPCPQCSETF…LNRHLRTKGG (165 aa)) is interaction with BMI1. The tract at residues 520–579 (CPQCGKRYKTKNAQQVHFRTHLEEKPHVCQFCSRGFREKGSLVRHVRHHTGEKPFKCYKC) is mediates interaction with TP53. The C2H2-type 9; degenerate zinc finger occupies 574–596 (FKCYKCGRGFAEHGTLNRHLRTK). The interval 574–596 (FKCYKCGRGFAEHGTLNRHLRTK) is mediates interaction with RASSF1.

As to quaternary structure, homodimer; binds DNA as a dimer. Forms a complex with CDKN2A and TP53. Interacts with HDAC1, HMGA2 and RASSF1. Interactions with TP53, RB1, ANP32A and probably BMI1 and FHL2 regulate E4F1 activity. Post-translationally, phosphorylated; phosphorylation is cell cycle-dependent and regulates DNA-binding activity and function. May be sumoylated by UBE2I upon interaction with CDKN2A. Ubiquitously expressed.

The protein localises to the nucleus. The protein resides in the nucleoplasm. Its subcellular location is the cytoplasm. It carries out the reaction S-ubiquitinyl-[E2 ubiquitin-conjugating enzyme]-L-cysteine + [acceptor protein]-L-lysine = [E2 ubiquitin-conjugating enzyme]-L-cysteine + N(6)-ubiquitinyl-[acceptor protein]-L-lysine.. It participates in protein modification; protein ubiquitination. Functionally, may function as a transcriptional repressor. May also function as a ubiquitin ligase mediating ubiquitination of chromatin-associated TP53. Functions in cell survival and proliferation through control of the cell cycle. Functions in the p53 and pRB tumor suppressor pathways and regulates the cyclin CCNA2 transcription. In Mus musculus (Mouse), this protein is Transcription factor E4F1 (E4f1).